Reading from the N-terminus, the 105-residue chain is Urease subunit beta (105 aa).

This sequence belongs to the urease beta subunit family. In terms of assembly, heterotrimer of UreA (gamma), UreB (beta) and UreC (alpha) subunits. Three heterotrimers associate to form the active enzyme.

It localises to the cytoplasm. It catalyses the reaction urea + 2 H2O + H(+) = hydrogencarbonate + 2 NH4(+). It participates in nitrogen metabolism; urea degradation; CO(2) and NH(3) from urea (urease route): step 1/1. The sequence is that of Urease subunit beta from Mycobacterium sp. (strain JLS).